The chain runs to 203 residues: DNA-directed RNA polymerase subunit gamma (203 aa).

The Zn(2+) site is built by cysteine 34, cysteine 36, cysteine 49, and cysteine 52.

Belongs to the RNA polymerase beta' chain family. RpoC1 subfamily. In cyanobacteria the RNAP catalytic core is composed of 2 alpha, 1 beta, 1 beta', 1 gamma and 1 omega subunit. When a sigma factor is associated with the core the holoenzyme is formed, which can initiate transcription. Zn(2+) serves as cofactor.

It catalyses the reaction RNA(n) + a ribonucleoside 5'-triphosphate = RNA(n+1) + diphosphate. DNA-dependent RNA polymerase catalyzes the transcription of DNA into RNA using the four ribonucleoside triphosphates as substrates. The sequence is that of DNA-directed RNA polymerase subunit gamma (rpoC1) from Prochloron sp.